The sequence spans 145 residues: D-aminoacyl-tRNA deacylase (145 aa).

The Gly-cisPro motif, important for rejection of L-amino acids motif lies at 137-138 (GP).

It belongs to the DTD family. As to quaternary structure, homodimer.

The protein resides in the cytoplasm. It carries out the reaction glycyl-tRNA(Ala) + H2O = tRNA(Ala) + glycine + H(+). It catalyses the reaction a D-aminoacyl-tRNA + H2O = a tRNA + a D-alpha-amino acid + H(+). Its function is as follows. An aminoacyl-tRNA editing enzyme that deacylates mischarged D-aminoacyl-tRNAs. Also deacylates mischarged glycyl-tRNA(Ala), protecting cells against glycine mischarging by AlaRS. Acts via tRNA-based rather than protein-based catalysis; rejects L-amino acids rather than detecting D-amino acids in the active site. By recycling D-aminoacyl-tRNA to D-amino acids and free tRNA molecules, this enzyme counteracts the toxicity associated with the formation of D-aminoacyl-tRNA entities in vivo and helps enforce protein L-homochirality. In Yersinia enterocolitica serotype O:8 / biotype 1B (strain NCTC 13174 / 8081), this protein is D-aminoacyl-tRNA deacylase.